A 690-amino-acid polypeptide reads, in one-letter code: Elongation factor G (690 aa).

The region spanning 8–282 (EKTRNIGIMA…AVVAYMPSPL (275 aa)) is the tr-type G domain. GTP contacts are provided by residues 17 to 24 (AHIDAGKT), 81 to 85 (DTPGH), and 135 to 138 (NKMD).

It belongs to the TRAFAC class translation factor GTPase superfamily. Classic translation factor GTPase family. EF-G/EF-2 subfamily.

The protein localises to the cytoplasm. Functionally, catalyzes the GTP-dependent ribosomal translocation step during translation elongation. During this step, the ribosome changes from the pre-translocational (PRE) to the post-translocational (POST) state as the newly formed A-site-bound peptidyl-tRNA and P-site-bound deacylated tRNA move to the P and E sites, respectively. Catalyzes the coordinated movement of the two tRNA molecules, the mRNA and conformational changes in the ribosome. In Alkaliphilus oremlandii (strain OhILAs) (Clostridium oremlandii (strain OhILAs)), this protein is Elongation factor G.